We begin with the raw amino-acid sequence, 837 residues long: Endo-1,4-beta-xylanase Z (837 aa).

The N-terminal stretch at 1–28 (MSRKLFSVLLVGLMLMTSLLVTISSTSA) is a signal peptide. Residues 299–420 (TRIEAEDYDG…PVNIDWFTFG (122 aa)) enclose the CBM6 domain. The region spanning 424-492 (SSTGLGDLNG…ILRIITEFPG (69 aa)) is the Dockerin domain. The 322-residue stretch at 512–833 (TISGNALRDY…KPAYNAIKEA (322 aa)) folds into the GH10 domain. Catalysis depends on glutamate 645, which acts as the Proton donor. Glutamate 754 functions as the Nucleophile in the catalytic mechanism. The cysteines at positions 783 and 789 are disulfide-linked.

Belongs to the glycosyl hydrolase 10 (cellulase F) family.

It carries out the reaction Endohydrolysis of (1-&gt;4)-beta-D-xylosidic linkages in xylans.. This chain is Endo-1,4-beta-xylanase Z (xynZ), found in Acetivibrio thermocellus (strain ATCC 27405 / DSM 1237 / JCM 9322 / NBRC 103400 / NCIMB 10682 / NRRL B-4536 / VPI 7372) (Clostridium thermocellum).